We begin with the raw amino-acid sequence, 275 residues long: Adaptin ear-binding coat-associated protein 1 (275 aa).

Residues 168–275 (AKKGGASKPR…APQPSNWVQF (108 aa)) form a disordered region. Pro residues predominate over residues 187 to 201 (LPPPPGGKVTIPPPS). Residue Thr211 is modified to Phosphothreonine. Residues 233–248 (SPAPVSTSAPAPVSTS) show a composition bias toward low complexity. 2 short sequence motifs (WXXF motif) span residues 252-255 (WGDF) and 272-275 (WVQF). Positions 256–275 (STASSSVPNQAPQPSNWVQF) are enriched in polar residues.

This sequence belongs to the NECAP family. In terms of assembly, interacts with AP1G1 and AP2A1 components of the adapter protein complexes AP-1 and AP-2. Interacts with the GAE domain proteins GGA1, GGA2 and GGA3. As to expression, expressed primarily in brain (at protein level).

It localises to the cytoplasmic vesicle. Its subcellular location is the clathrin-coated vesicle membrane. The protein localises to the cell membrane. In terms of biological role, involved in endocytosis. The polypeptide is Adaptin ear-binding coat-associated protein 1 (Necap1) (Mus musculus (Mouse)).